An 89-amino-acid polypeptide reads, in one-letter code: Elongation factor 1-beta (89 aa).

This sequence belongs to the EF-1-beta/EF-1-delta family.

Functionally, promotes the exchange of GDP for GTP in EF-1-alpha/GDP, thus allowing the regeneration of EF-1-alpha/GTP that could then be used to form the ternary complex EF-1-alpha/GTP/AAtRNA. The polypeptide is Elongation factor 1-beta (ef1b) (Methanothermobacter thermautotrophicus (strain ATCC 29096 / DSM 1053 / JCM 10044 / NBRC 100330 / Delta H) (Methanobacterium thermoautotrophicum)).